Reading from the N-terminus, the 1149-residue chain is Transforming acidic coiled-coil-containing protein 2 (1149 aa).

Disordered regions lie at residues 1 to 73 (MGNE…GSNQ), 91 to 227 (SASP…ASSG), and 247 to 430 (PCSA…VPLT). Over residues 13 to 35 (TSSVQSPRSLQPPGKSQSLQKQQ) the composition is skewed to polar residues. Positions 91–106 (SASPSAARASPAPLAP) are enriched in low complexity. S100 is modified (phosphoserine). The segment covering 155-180 (KAPPAPPPPPPEVTPEPEVIDPPAPE) has biased composition (pro residues). Position 265 is a phosphoserine (S265). Polar residues-rich tracts occupy residues 267–284 (ESVP…SLQA) and 300–317 (TLTT…SSTL). Over residues 318–334 (KRTKKTRPPSLKKKQAT) the composition is skewed to basic residues. S354 bears the Phosphoserine mark. The span at 358–368 (SEEHLAPETKT) shows a compositional bias: basic and acidic residues. S419 is subject to Phosphoserine. The residue at position 439 (T439) is a Phosphothreonine. The disordered stretch occupies residues 463 to 617 (SEDKGSWESQ…PAKKKKTPLK (155 aa)). Over residues 481-498 (KIGKKPVAKMPLRRPKMK) the composition is skewed to basic residues. Positions 508–596 (PASPPRSPTE…SPASFEIPAS (89 aa)) constitute an SPAZ domain. 2 positions are modified to phosphoserine: S510 and S514. T516 bears the Phosphothreonine mark. The span at 541–561 (NPFSSTSKMQESPKLSQQSYN) shows a compositional bias: polar residues. S552, S582, S585, S587, and S596 each carry phosphoserine. The span at 575-590 (KASSKTPSSPSKSPAS) shows a compositional bias: low complexity. Residues T632, T653, and T657 each carry the phosphothreonine modification. Disordered regions lie at residues 636 to 665 (KKSP…SAIS) and 696 to 719 (DFPQ…SEEL). Residues 652–665 (PTPAATPEAPSAIS) show a composition bias toward low complexity. Positions 701 to 716 (SDLSNFVNETKFNSPS) are enriched in polar residues. S714 and S736 each carry phosphoserine. T755 is subject to Phosphothreonine. A disordered region spans residues 756–780 (PQESPVKSPPVRMSDSPTPCSGSSF). Phosphoserine occurs at positions 759 and 771. Residues 770-780 (DSPTPCSGSSF) are compositionally biased toward polar residues. 2 coiled-coil regions span residues 877-905 (AQKL…LASR) and 948-1148 (DLDS…KMGK).

The protein belongs to the TACC family. Interacts with microtubules. Interacts with YEATS4, GCN5L2 and PCAF. Interacts with CCDC100/CEP120. In terms of processing, phosphorylated; which is required for localization in centrosome. In terms of tissue distribution, expressed in brain, kidney, lung, thymus and ovary. Not detectable in normal tissues at protein level.

It localises to the cytoplasm. The protein localises to the nucleus. Its subcellular location is the cytoskeleton. It is found in the microtubule organizing center. The protein resides in the centrosome. Plays a role in the microtubule-dependent coupling of the nucleus and the centrosome. Involved in the processes that regulate centrosome-mediated interkinetic nuclear migration (INM) of neural progenitors. May play a role in organizing centrosomal microtubules. The polypeptide is Transforming acidic coiled-coil-containing protein 2 (Tacc2) (Mus musculus (Mouse)).